The sequence spans 132 residues: Fatty acid-binding protein (132 aa).

Residues R107 and 127–129 (RNY) each bind (5Z,8Z,11Z,14Z)-eicosatetraenoate. (9Z)-octadecenoate contacts are provided by residues R107 and 127 to 129 (RNY).

It belongs to the calycin superfamily. Fatty-acid binding protein (FABP) family.

It localises to the cytoplasm. Functionally, may play a role in the transport of fatty acids. Binds to various fatty acids but not retinoids. This Schistosoma japonicum (Blood fluke) protein is Fatty acid-binding protein.